The primary structure comprises 426 residues: 3-phosphoshikimate 1-carboxyvinyltransferase (426 aa).

Residues Lys22, Ser23, and Arg27 each coordinate 3-phosphoshikimate. Lys22 provides a ligand contact to phosphoenolpyruvate. Residues Gly96 and Arg124 each coordinate phosphoenolpyruvate. 3-phosphoshikimate is bound by residues Ser170, Ser171, Gln172, Ser198, Asp314, Asn337, and Lys341. Gln172 provides a ligand contact to phosphoenolpyruvate. Asp314 serves as the catalytic Proton acceptor. Arg345, Arg387, and Lys412 together coordinate phosphoenolpyruvate.

It belongs to the EPSP synthase family. In terms of assembly, monomer.

It localises to the cytoplasm. The catalysed reaction is 3-phosphoshikimate + phosphoenolpyruvate = 5-O-(1-carboxyvinyl)-3-phosphoshikimate + phosphate. The protein operates within metabolic intermediate biosynthesis; chorismate biosynthesis; chorismate from D-erythrose 4-phosphate and phosphoenolpyruvate: step 6/7. In terms of biological role, catalyzes the transfer of the enolpyruvyl moiety of phosphoenolpyruvate (PEP) to the 5-hydroxyl of shikimate-3-phosphate (S3P) to produce enolpyruvyl shikimate-3-phosphate and inorganic phosphate. This Aliivibrio fischeri (strain ATCC 700601 / ES114) (Vibrio fischeri) protein is 3-phosphoshikimate 1-carboxyvinyltransferase.